The following is a 358-amino-acid chain: Histidinol-phosphate aminotransferase (358 aa).

Position 218 is an N6-(pyridoxal phosphate)lysine (lysine 218).

This sequence belongs to the class-II pyridoxal-phosphate-dependent aminotransferase family. Histidinol-phosphate aminotransferase subfamily. Homodimer. Pyridoxal 5'-phosphate serves as cofactor.

It carries out the reaction L-histidinol phosphate + 2-oxoglutarate = 3-(imidazol-4-yl)-2-oxopropyl phosphate + L-glutamate. The protein operates within amino-acid biosynthesis; L-histidine biosynthesis; L-histidine from 5-phospho-alpha-D-ribose 1-diphosphate: step 7/9. This is Histidinol-phosphate aminotransferase from Dehalococcoides mccartyi (strain ATCC BAA-2266 / KCTC 15142 / 195) (Dehalococcoides ethenogenes (strain 195)).